The chain runs to 44 residues: Photosystem I reaction center subunit IX (44 aa).

Residues 9–29 (YMRSAPVVAAAWITMTAGIII) form a helical membrane-spanning segment.

The protein belongs to the PsaJ family.

It localises to the cellular thylakoid membrane. May help in the organization of the PsaE and PsaF subunits. This chain is Photosystem I reaction center subunit IX, found in Prochlorococcus marinus (strain MIT 9312).